A 324-amino-acid polypeptide reads, in one-letter code: Glyoxylate/hydroxypyruvate reductase B (324 aa).

Residues Arg-237 and Glu-266 contribute to the active site. The Proton donor role is filled by His-285.

The protein belongs to the D-isomer specific 2-hydroxyacid dehydrogenase family. GhrB subfamily. In terms of assembly, homodimer.

It localises to the cytoplasm. The catalysed reaction is glycolate + NADP(+) = glyoxylate + NADPH + H(+). It carries out the reaction (R)-glycerate + NAD(+) = 3-hydroxypyruvate + NADH + H(+). The enzyme catalyses (R)-glycerate + NADP(+) = 3-hydroxypyruvate + NADPH + H(+). Catalyzes the NADPH-dependent reduction of glyoxylate and hydroxypyruvate into glycolate and glycerate, respectively. This Salmonella gallinarum (strain 287/91 / NCTC 13346) protein is Glyoxylate/hydroxypyruvate reductase B.